Consider the following 283-residue polypeptide: Putative transposase InsK for insertion sequence element IS150 (283 aa).

The Integrase catalytic domain occupies 117–279 (KATRPNEKWV…TPIEYRNQTY (163 aa)).

Belongs to the transposase IS3/IS150/IS904 family.

In terms of biological role, involved in the transposition of the insertion sequence IS150. The chain is Putative transposase InsK for insertion sequence element IS150 (insK) from Escherichia coli (strain K12).